A 665-amino-acid chain; its full sequence is ELMO family protein LMO1 (665 aa).

Forms an active heterodimer with DCK1.

The protein resides in the cytoplasm. It is found in the mitochondrion. Forms a transiant heterodimeric complex with DCK1, that acts as a guanine nucleotide exchange factor (GEF) for the small GTPase RHO5. DCK1, LMO1 and RHO5 relocate to mitochondria upon oxidative stress and trigger cell death. The DCK1/LMO1/RHO5 signaling module mediates mitochondrial turnover under nitrogen starvation conditions via mitophagy. The DCK1/LMO1/RHO5 signaling module also plays a role in cell wall integrity signaling. The sequence is that of ELMO family protein LMO1 from Saccharomyces cerevisiae (strain ATCC 204508 / S288c) (Baker's yeast).